A 299-amino-acid polypeptide reads, in one-letter code: Syntenin-1 (299 aa).

S2 carries the post-translational modification N-acetylserine. The interval 2-103 (SLYPSLEDLK…VAPVTGNDAG (102 aa)) is interaction with PDCD6IP. Short sequence motifs (LYPX(n)L motif) lie at residues 3–7 (LYPSL), 46–50 (LYPKL), and 50–54 (LYPEL). At S6 the chain carries Phosphoserine. Y47 is modified (phosphotyrosine). 2 consecutive PDZ domains span residues 115–194 (EVIL…IRDR) and 199–273 (TVTM…IMPT). 251–252 (KD) serves as a coordination point for a 1,2-diacyl-sn-glycero-3-phospho-(1D-myo-inositol-4,5-bisphosphate).

As to quaternary structure, monomer and homodimer. Interacts with SDC1, SDC2, SDC3, SDC4, NRXN2, EPHA7, EPHB1, NF2 isoform 1, TGFA, IL5RA, NFASC, SDCBP2 and PTPRJ. Interacts with PDCD6IP. Forms a complex with PDCD6IP and SDC2. Interacts (via C-terminus) with TGFBR1. Binds to FZD7; this interaction is increased by inositol trisphosphate (IP3). Interacts with SMO. In terms of processing, phosphorylated on tyrosine residues.

The protein resides in the cell junction. It is found in the focal adhesion. Its subcellular location is the adherens junction. It localises to the cell membrane. The protein localises to the endoplasmic reticulum membrane. The protein resides in the nucleus. It is found in the melanosome. Its subcellular location is the cytoplasm. It localises to the cytosol. The protein localises to the cytoskeleton. The protein resides in the secreted. It is found in the extracellular exosome. Its subcellular location is the membrane raft. Its function is as follows. Multifunctional adapter protein involved in diverse array of functions including trafficking of transmembrane proteins, neuro and immunomodulation, exosome biogenesis, and tumorigenesis. Positively regulates TGFB1-mediated SMAD2/3 activation and TGFB1-induced epithelial-to-mesenchymal transition (EMT) and cell migration in various cell types. May increase TGFB1 signaling by enhancing cell-surface expression of TGFR1 by preventing the interaction between TGFR1 and CAV1 and subsequent CAV1-dependent internalization and degradation of TGFR1. In concert with SDC1/4 and PDCD6IP, regulates exosome biogenesis. Regulates migration, growth, proliferation, and cell cycle progression in a variety of cancer types. In adherens junctions may function to couple syndecans to cytoskeletal proteins or signaling components. Seems to couple transcription factor SOX4 to the IL-5 receptor (IL5RA). May also play a role in vesicular trafficking. Seems to be required for the targeting of TGFA to the cell surface in the early secretory pathway. This is Syntenin-1 (Sdcbp) from Mus musculus (Mouse).